A 261-amino-acid polypeptide reads, in one-letter code: HLA class II histocompatibility antigen, DM alpha chain (261 aa).

An N-terminal signal peptide occupies residues 1–26 (MGHEQNQGAALLQMLPLLWLLPHSWA). Positions 27 to 124 (VPEAPTPMWP…KLDGKIPVSR (98 aa)) are alpha-1. Residues 27-233 (VPEAPTPMWP…PSDLLENVLC (207 aa)) are Lumenal-facing. An N-linked (GlcNAc...) asparagine glycan is attached at asparagine 41. Disulfide bonds link cysteine 50-cysteine 105 and cysteine 147-cysteine 202. The Ig-like C1-type domain maps to 121 to 215 (PVSRGFPIAE…HEIDRYTAIA (95 aa)). Residues 125–217 (GFPIAEVFTL…IDRYTAIAYW (93 aa)) form an alpha-2 region. The connecting peptide stretch occupies residues 218–233 (VPRNALPSDLLENVLC). The chain crosses the membrane as a helical span at residues 234-254 (GVAFGLGVLGIIVGIVLIIYF). Over 255 to 261 (RKPCSGD) the chain is Cytoplasmic.

This sequence belongs to the MHC class II family. In terms of assembly, heterodimer of an alpha chain (DMA) and a beta chain (DMB). Interacts with MHCII; this interaction mediates rapid selection of high-affinity peptides in a pH-dependent manner, with an optimum at pH 5.5.

Its subcellular location is the late endosome membrane. The protein localises to the lysosome membrane. Plays a critical role in catalyzing the release of class II-associated invariant chain peptide (CLIP) from newly synthesized MHC class II molecules and freeing the peptide binding site for acquisition of antigenic peptides. In B-cells, the interaction between HLA-DM and MHC class II molecules is regulated by HLA-DO. The sequence is that of HLA class II histocompatibility antigen, DM alpha chain (HLA-DMA) from Homo sapiens (Human).